The chain runs to 311 residues: Probable manganese-dependent inorganic pyrophosphatase (311 aa).

Positions 9, 13, 15, 75, 97, and 149 each coordinate Mn(2+).

Belongs to the PPase class C family. Mn(2+) is required as a cofactor.

The protein resides in the cytoplasm. The catalysed reaction is diphosphate + H2O = 2 phosphate + H(+). The sequence is that of Probable manganese-dependent inorganic pyrophosphatase from Lactobacillus gasseri (strain ATCC 33323 / DSM 20243 / BCRC 14619 / CIP 102991 / JCM 1131 / KCTC 3163 / NCIMB 11718 / NCTC 13722 / AM63).